The following is a 594-amino-acid chain: Nucleolar protein 56 (594 aa).

Glycyl lysine isopeptide (Lys-Gly) (interchain with G-Cter in SUMO2) cross-links involve residues Lys87, Lys230, and Lys240. Positions 292-410 constitute a Nop domain; sequence VAPSLSALIG…VEERLSFYET (119 aa). Ser314 bears the Phosphoserine mark. At Arg359 the chain carries Omega-N-methylarginine. 2 stretches are compositionally biased toward low complexity: residues 458–469 and 488–504; these read ALASSENSSSTP and QEVP…ISFS. The segment at 458-594 is disordered; it reads ALASSENSSS…KKFHKASQED (137 aa). A phosphoserine mark is found at Ser466 and Ser467. Residue Thr468 is modified to Phosphothreonine. Residues Ser511, Ser519, Ser520, and Ser537 each carry the phosphoserine modification. Lys540 participates in a covalent cross-link: Glycyl lysine isopeptide (Lys-Gly) (interchain with G-Cter in SUMO2). Position 561 is an N6-acetyllysine (Lys561). The residue at position 563 (Ser563) is a Phosphoserine. Lys564 participates in a covalent cross-link: Glycyl lysine isopeptide (Lys-Gly) (interchain with G-Cter in SUMO2). A phosphoserine mark is found at Ser569, Ser570, Ser579, and Ser581. Residues 580–594 show a composition bias toward basic residues; the sequence is SSKKKKKFHKASQED.

The protein belongs to the NOP5/NOP56 family. In terms of assembly, part of a large pre-ribosomal ribonucleoprotein (RNP) complex, that consists of at least 62 ribosomal proteins, 45 nonribosomal proteins and both pre-rRNA and mature rRNA species. Within this complex directly interacts with TCOF1 in an RNA-independent manner. Core component of box C/D small nucleolar ribonucleoprotein (snoRNP) particles; the core proteins SNU13, NOP56, NOP58 and FBL or FBLL1 assemble stepwise onto the snoRNA. Interacts with NOP1 and NOP58. Interacts with NUFIP1, RUVBL1 and RUVBL2; RUVBL1:RUVBL2 seem to bridge the association of NOP56 with NUFIP1. Part of the small subunit (SSU) processome, composed of more than 70 proteins and the RNA chaperone small nucleolar RNA (snoRNA) U3. Interacts with NOP2 and FBL.

It localises to the nucleus. The protein resides in the nucleolus. It is found in the cytoplasm. The protein localises to the nucleoplasm. Its function is as follows. Involved in the early to middle stages of 60S ribosomal subunit biogenesis. Required for the biogenesis of box C/D snoRNAs such U3, U8 and U14 snoRNAs. Part of the small subunit (SSU) processome, first precursor of the small eukaryotic ribosomal subunit. During the assembly of the SSU processome in the nucleolus, many ribosome biogenesis factors, an RNA chaperone and ribosomal proteins associate with the nascent pre-rRNA and work in concert to generate RNA folding, modifications, rearrangements and cleavage as well as targeted degradation of pre-ribosomal RNA by the RNA exosome. Core component of box C/D small nucleolar ribonucleoprotein (snoRNP) complexes that function in methylation of multiple sites on ribosomal RNAs (rRNAs) and messenger RNAs (mRNAs). The chain is Nucleolar protein 56 from Homo sapiens (Human).